The following is a 415-amino-acid chain: MVFAHRMDNSKPHLIIPTLLVPLQNRSCTETATPLPSQYLMELSEEHSWMSNQTDLHYVLKPGEVATASIFFGILWLFSIFGNSLVCLVIHRSRRTQSTTNYFVVSMACADLLISVASTPFVLLQFTTGRWTLGSATCKVVRYFQYLTPGVQIYVLLSICIDRFYTIVYPLSFKVSREKAKKMIAASWVFDAGFVTPVLFFYGSNWDSHCNYFLPSSWEGTAYTVIHFLVGFVIPSVLIILFYQKVIKYIWRIGTDGRTVRRTMNIVPRTKVKTIKMFLILNLLFLLSWLPFHVAQLWHPHEQDYKKSSLVFTAITWISFSSSASKPTLYSIYNANFRRGMKETFCMSSMKCYRSNAYTITTSSRMAKKNYVGISEIPSMAKTITKDSIYDSFDREAKEKKLAWPINSNPPNTFV.

Topologically, residues 1–69 (MVFAHRMDNS…LKPGEVATAS (69 aa)) are extracellular. Residues asparagine 25 and asparagine 52 are each glycosylated (N-linked (GlcNAc...) asparagine). Residues 70 to 90 (IFFGILWLFSIFGNSLVCLVI) form a helical membrane-spanning segment. The Cytoplasmic portion of the chain corresponds to 91 to 102 (HRSRRTQSTTNY). Residues 103–123 (FVVSMACADLLISVASTPFVL) traverse the membrane as a helical segment. The Extracellular segment spans residues 124–143 (LQFTTGRWTLGSATCKVVRY). Cysteines 138 and 210 form a disulfide. Residues 144 to 161 (FQYLTPGVQIYVLLSICI) traverse the membrane as a helical segment. The Cytoplasmic portion of the chain corresponds to 162–182 (DRFYTIVYPLSFKVSREKAKK). Residues 183–203 (MIAASWVFDAGFVTPVLFFYG) form a helical membrane-spanning segment. Residues 204–221 (SNWDSHCNYFLPSSWEGT) lie on the Extracellular side of the membrane. Residues 222-242 (AYTVIHFLVGFVIPSVLIILF) traverse the membrane as a helical segment. Topologically, residues 243-277 (YQKVIKYIWRIGTDGRTVRRTMNIVPRTKVKTIKM) are cytoplasmic. The helical transmembrane segment at 278–298 (FLILNLLFLLSWLPFHVAQLW) threads the bilayer. The Extracellular portion of the chain corresponds to 299–309 (HPHEQDYKKSS). A helical transmembrane segment spans residues 310-325 (LVFTAITWISFSSSAS). Over 326-415 (KPTLYSIYNA…INSNPPNTFV (90 aa)) the chain is Cytoplasmic.

Belongs to the G-protein coupled receptor 1 family. In terms of tissue distribution, abundant expression in the brain.

The protein resides in the cell membrane. Its function is as follows. G-protein coupled receptor that plays a role in the regulation of circadian rhythms and energy metabolism. Participates in maintaining proper circadian gene expression in the suprachiasmatic nucleus (SCN), the locus of the master circadian clock in the brain. May function as a coordinator of aging-associated metabolic dysfunction, stress response, DNA integrity management, and eventual senescence. Upon binding to adropin, modulates mitochondrial energy metabolism via the p44/42-PDK4 signaling pathway, influencing pyruvate dehydrogenase activity. The polypeptide is Probable G-protein coupled receptor 19 (GPR19) (Homo sapiens (Human)).